Here is a 71-residue protein sequence, read N- to C-terminus: Defensin 1 (71 aa).

The N-terminal stretch at 1 to 25 (KTVAGFCIFFLVLFLAQEGVVKTEA) is a signal peptide. Cystine bridges form between C28/C71, C39/C60, and C45/C65.

The protein belongs to the DEFL family. As to quaternary structure, may form dimers. In terms of processing, not glycosylated. Contains 4 disulfide bonds. Post-translationally, met-61 and Met-63 might be oxidized in some molecules.

In terms of biological role, probably has antifungal activity. This chain is Defensin 1, found in Arachis hypogaea (Peanut).